Here is a 611-residue protein sequence, read N- to C-terminus: Fatty acid photodecarboxylase, chloroplastic (611 aa).

The segment at 1-22 is disordered; the sequence is MMLGPKTVTRGATKGAAPRSMA. The N-terminal 36 residues, 1–36, are a transit peptide targeting the chloroplast; it reads MMLGPKTVTRGATKGAAPRSMAARRVGGARRLSVRA. FAD contacts are provided by residues 55 to 56, Glu76, Met125, Ser129, and 133 to 136; these read TA and NATL. Residues Cys392, Arg412, Tyr427, and Gln447 each contribute to the hexadecanoate site. Gly582 lines the FAD pocket.

This sequence belongs to the GMC oxidoreductase family. Requires FAD as cofactor.

Its subcellular location is the plastid. The protein resides in the chloroplast. It carries out the reaction a long-chain fatty acid + hnu + H(+) = a long-chain alkane + CO2. The catalysed reaction is hnu + hexadecanoate + H(+) = pentadecane + CO2. Its activity is regulated as follows. Activated by blue light and repressed by red light. In terms of biological role, catalyzes the decarboxylation of free fatty acids to n-alkanes or n-alkenes in response to blue light. Substrate preference is toward fatty acids with C17 or C18 chains. Saturated fatty acids are converted to alkanes, not alkenes. The decarboxylation is initiated through electron abstraction from the fatty acid by the photo-excited FAD. In Chlamydomonas reinhardtii (Chlamydomonas smithii), this protein is Fatty acid photodecarboxylase, chloroplastic.